The sequence spans 419 residues: UDP-N-acetylglucosamine 1-carboxyvinyltransferase (419 aa).

Phosphoenolpyruvate is bound at residue 22–23; that stretch reads KN. Arginine 92 is a UDP-N-acetyl-alpha-D-glucosamine binding site. Cysteine 116 acts as the Proton donor in catalysis. Residue cysteine 116 is modified to 2-(S-cysteinyl)pyruvic acid O-phosphothioketal. UDP-N-acetyl-alpha-D-glucosamine contacts are provided by residues 121-125, aspartate 307, and leucine 329; that span reads RPIDL.

Belongs to the EPSP synthase family. MurA subfamily.

The protein resides in the cytoplasm. It catalyses the reaction phosphoenolpyruvate + UDP-N-acetyl-alpha-D-glucosamine = UDP-N-acetyl-3-O-(1-carboxyvinyl)-alpha-D-glucosamine + phosphate. Its pathway is cell wall biogenesis; peptidoglycan biosynthesis. In terms of biological role, cell wall formation. Adds enolpyruvyl to UDP-N-acetylglucosamine. In Campylobacter fetus subsp. fetus (strain 82-40), this protein is UDP-N-acetylglucosamine 1-carboxyvinyltransferase.